The following is a 436-amino-acid chain: Xylose isomerase (436 aa).

Positions 306 and 308 each coordinate Mg(2+).

The protein belongs to the xylose isomerase family. As to quaternary structure, homotetramer. It depends on Mg(2+) as a cofactor.

It is found in the cytoplasm. It catalyses the reaction alpha-D-xylose = alpha-D-xylulofuranose. In Sinorhizobium fredii (strain NBRC 101917 / NGR234), this protein is Xylose isomerase.